Reading from the N-terminus, the 82-residue chain is Small ribosomal subunit protein bS16 (82 aa).

It belongs to the bacterial ribosomal protein bS16 family.

This Synechococcus elongatus (strain ATCC 33912 / PCC 7942 / FACHB-805) (Anacystis nidulans R2) protein is Small ribosomal subunit protein bS16.